A 681-amino-acid chain; its full sequence is Kojibiose hydrolase (681 aa).

Positions M1–S23 are cleaved as a signal peptide. Beta-D-glucose-binding residues include R74, W343, D344, W391, E392, T407, E472, W473, K538, Q539, and D573. Residue E472 is the Proton donor of the active site. The active-site Proton acceptor is the E616.

Belongs to the glycosyl hydrolase 65 family. Homohexamer; dimer of trimers.

Its subcellular location is the periplasm. It carries out the reaction kojibiose + H2O = beta-D-glucose + D-glucose. In terms of biological role, glycosidase that specifically hydrolyzes kojibiose to beta-glucose and glucose. Also hydrolyzes, with lower catalytic efficiency, longer kojioligosaccharides (from kojitriose to kojipentaose) and shorter oligosaccharides produced by the degradation of dextran-containing alpha-1,2 branches. Probably acts on alpha-(1-&gt;2)-glucosyl isomaltooligosaccharides. Shows weak activity with nigerose but has no activity toward p-nitrophenyl alpha-glucopyranoside, which is a general substrate of exo-acting alpha-glucoside hydrolases. Has a strict specificity for alpha-1,2-glucosidic linkages. Catalyzes the hydrolytic reaction via an anomer-inverting mechanism. The chain is Kojibiose hydrolase from Flavobacterium johnsoniae (strain ATCC 17061 / DSM 2064 / JCM 8514 / BCRC 14874 / CCUG 350202 / NBRC 14942 / NCIMB 11054 / UW101) (Cytophaga johnsonae).